Here is a 152-residue protein sequence, read N- to C-terminus: SKP1-like protein 12 (152 aa).

An interaction with the F-box domain of F-box proteins region spans residues 94–152 (ILAANYLNIKSLFDLTCQTVADMIKGKTPEEIRSTFNIENDFTPEEEEAVRKENQWAFE).

The protein belongs to the SKP1 family. Part of a SCF (SKP1-cullin-F-box) protein ligase complex. Interacts with ADO3/FKF1, COI1/FBL2, EBF1/FBL6, PP2B10, At3g61590 and At5g49610. In terms of tissue distribution, expressed in young seedlings, roots, leaves, floral stems, inflorescences, and siliques, with a slightly higher level in inflorescence than in other tissues.

Its subcellular location is the nucleus. Its pathway is protein modification; protein ubiquitination. In terms of biological role, involved in ubiquitination and subsequent proteasomal degradation of target proteins. Together with CUL1, RBX1 and a F-box protein, it forms a SCF E3 ubiquitin ligase complex. The functional specificity of this complex depends on the type of F-box protein. In the SCF complex, it serves as an adapter that links the F-box protein to CUL1. Plays a role during early flowers reproductive development. This Arabidopsis thaliana (Mouse-ear cress) protein is SKP1-like protein 12 (ASK12).